The chain runs to 221 residues: Transcription factor bHLH148 (221 aa).

Disordered stretches follow at residues 1–45 and 70–89; these read MASL…GEIH and LNSSASTSSSPTAQKRGKAV. 2 stretches are compositionally biased toward low complexity: residues 26–41 and 72–82; these read SASSAASSRSSASSVS and SSASTSSSPTA. Residues 148–197 enclose the bHLH domain; it reads KRRVSVLRLNKKSIPDVNRKVRVLGRLVPGCGKQSVPVILEEATDYIQAL.

Homodimer. Interacts with PRE3. Binds to RSA1.

It is found in the nucleus. Its function is as follows. bHLH transcription factor that binds DNA on specific sequence 5'-CANNTG-3' in target gene promoters. Negatively regulates brassinosteroid signaling. Together with BHLH148/RITF1, regulates the transcription of several genes involved in the detoxification of reactive oxygen species (ROS) generated by salt (NaCl) stress. Confers tolerance to salt and to the oxidative stress-inducing reagents hydrogen peroxide H(2)O(2) and methyl viologen (MV). This Arabidopsis thaliana (Mouse-ear cress) protein is Transcription factor bHLH148.